A 235-amino-acid chain; its full sequence is UPF0758 protein CD630_11440 (235 aa).

In terms of domain architecture, MPN spans 113–235 (KIMNPWDIQR…YFSFKENMII (123 aa)). Zn(2+) is bound by residues His-184, His-186, and Asp-197. The JAMM motif motif lies at 184–197 (HNHPSGSVEPSRED).

The protein belongs to the UPF0758 family.

The chain is UPF0758 protein CD630_11440 from Clostridioides difficile (strain 630) (Peptoclostridium difficile).